We begin with the raw amino-acid sequence, 210 residues long: NADH dehydrogenase [ubiquinone] iron-sulfur protein 8, mitochondrial (210 aa).

A mitochondrion-targeting transit peptide spans methionine 1–alanine 34. 4Fe-4S ferredoxin-type domains follow at residues arginine 102 to glutamate 131 and threonine 141 to asparagine 170. Positions 111, 114, 117, 121, 150, 153, 156, and 160 each coordinate [4Fe-4S] cluster.

The protein belongs to the complex I 23 kDa subunit family. Core subunit of respiratory chain NADH dehydrogenase (Complex I) which is composed of 45 different subunits. This is a component of the iron-sulfur (IP) fragment of the enzyme. Interacts with RAB5IF. The cofactor is [4Fe-4S] cluster.

Its subcellular location is the mitochondrion inner membrane. The catalysed reaction is a ubiquinone + NADH + 5 H(+)(in) = a ubiquinol + NAD(+) + 4 H(+)(out). Core subunit of the mitochondrial membrane respiratory chain NADH dehydrogenase (Complex I) which catalyzes electron transfer from NADH through the respiratory chain, using ubiquinone as an electron acceptor. Essential for the catalytic activity and assembly of complex I. This Gorilla gorilla gorilla (Western lowland gorilla) protein is NADH dehydrogenase [ubiquinone] iron-sulfur protein 8, mitochondrial (NDUFS8).